The chain runs to 312 residues: Fe-S cluster assembly protein DRE2 (312 aa).

The N-terminal SAM-like domain stretch occupies residues 7–139 (LSDVPRVLLL…VKPVFEEQSV (133 aa)). A linker region spans residues 140-204 (LLPFSINRSQ…EDELINEDEL (65 aa)). The [2Fe-2S] cluster site is built by Cys214, Cys225, Cys228, and Cys230. Positions 214–230 (CRPKAGKRRRACKDCTC) are fe-S binding site A. The [4Fe-4S] cluster site is built by Cys275, Cys278, Cys286, and Cys289. Short sequence motifs (cx2C motif) lie at residues 275–278 (CGNC) and 286–289 (CDGC). Positions 275–289 (CGNCSLGDAFRCDGC) are fe-S binding site B.

Belongs to the anamorsin family. As to quaternary structure, monomer. Interacts with TAH18. Interacts with MIA40. Requires [2Fe-2S] cluster as cofactor. [4Fe-4S] cluster serves as cofactor.

The protein resides in the cytoplasm. The protein localises to the mitochondrion intermembrane space. In terms of biological role, component of the cytosolic iron-sulfur (Fe-S) protein assembly (CIA) machinery required for the maturation of extramitochondrial Fe-S proteins. Part of an electron transfer chain functioning in an early step of cytosolic Fe-S biogenesis, facilitating the de novo assembly of a [4Fe-4S] cluster on the scaffold complex CFD1-NBP35. Electrons are transferred to DRE2 from NADPH via the FAD- and FMN-containing protein TAH18. TAH18-DRE2 are also required for the assembly of the diferric tyrosyl radical cofactor of ribonucleotide reductase (RNR), probably by providing electrons for reduction during radical cofactor maturation in the catalytic small subunit RNR2. This Arthroderma otae (strain ATCC MYA-4605 / CBS 113480) (Microsporum canis) protein is Fe-S cluster assembly protein DRE2.